We begin with the raw amino-acid sequence, 142 residues long: Large ribosomal subunit protein uL11 (142 aa).

It belongs to the universal ribosomal protein uL11 family. Part of the ribosomal stalk of the 50S ribosomal subunit. Interacts with L10 and the large rRNA to form the base of the stalk. L10 forms an elongated spine to which L12 dimers bind in a sequential fashion forming a multimeric L10(L12)X complex. In terms of processing, one or more lysine residues are methylated.

Forms part of the ribosomal stalk which helps the ribosome interact with GTP-bound translation factors. The protein is Large ribosomal subunit protein uL11 of Dichelobacter nodosus (strain VCS1703A).